The chain runs to 329 residues: CDP-6-deoxy-L-threo-D-glycero-4-hexulose-3-dehydrase reductase (329 aa).

Positions 2-93 (SLNVKLHPSG…ELDVNYYPEL (92 aa)) constitute a 2Fe-2S ferredoxin-type domain. The [2Fe-2S] cluster site is built by Cys-37, Cys-42, Cys-45, and Cys-75. The region spanning 98–197 (KKTYPCKLDS…EGPQGTFFVR (100 aa)) is the FAD-binding FR-type domain.

Monomer.

Its pathway is nucleotide-sugar biosynthesis; CDP-ascarylose biosynthesis. The protein operates within bacterial outer membrane biogenesis; lipopolysaccharide biosynthesis. In terms of biological role, participates in the conversion of CDP-6-deoxy-D-glycero-L-threo-4-hexulose to 3,6-dideoxy-D-glycero-D-glycero-4-hexulose together with CDP-6-deoxy-D-glycero-L-threo-4-hexulose-3-dehydrase (E1) in two consecutive steps. The detailed mechanism of E3 is not yet resolved. The chain is CDP-6-deoxy-L-threo-D-glycero-4-hexulose-3-dehydrase reductase (ascD) from Yersinia pestis.